The primary structure comprises 752 residues: Photosystem I P700 chlorophyll a apoprotein A1 (752 aa).

8 helical membrane passes run 73-96 (IFSA…FHGA), 159-182 (LYVT…FHYH), 198-222 (LNHH…HVSA), 294-312 (IAHH…GHQY), 349-372 (WHAQ…HHMY), 388-414 (LCIF…IFMV), 436-458 (AIIS…LYIH), and 533-551 (FLIH…LILL). [4Fe-4S] cluster-binding residues include C575 and C584. Transmembrane regions (helical) follow at residues 591–612 (HVFL…HFSW) and 666–688 (LSAY…MFLF). A chlorophyll a'-binding site is contributed by H677. 2 residues coordinate chlorophyll a: M685 and Y693. W694 contacts phylloquinone. The helical transmembrane segment at 726–746 (AVGVAHYLLGGIATTWAFFHA) threads the bilayer.

This sequence belongs to the PsaA/PsaB family. As to quaternary structure, the PsaA/B heterodimer binds the P700 chlorophyll special pair and subsequent electron acceptors. PSI consists of a core antenna complex that captures photons, and an electron transfer chain that converts photonic excitation into a charge separation. The cyanobacterial PSI reaction center is composed of one copy each of PsaA,B,C,D,E,F,I,J,K,L,M and X, and forms trimeric complexes. The cofactor is PSI electron transfer chain: 5 chlorophyll a, 1 chlorophyll a', 2 phylloquinones and 3 4Fe-4S clusters. PSI core antenna: 90 chlorophyll a, 22 carotenoids, 3 phospholipids and 1 galactolipid. P700 is a chlorophyll a/chlorophyll a' dimer, A0 is one or more chlorophyll a, A1 is one or both phylloquinones and FX is a shared 4Fe-4S iron-sulfur center..

The protein localises to the cellular thylakoid membrane. The catalysed reaction is reduced [plastocyanin] + hnu + oxidized [2Fe-2S]-[ferredoxin] = oxidized [plastocyanin] + reduced [2Fe-2S]-[ferredoxin]. In terms of biological role, psaA and PsaB bind P700, the primary electron donor of photosystem I (PSI), as well as the electron acceptors A0, A1 and FX. PSI is a plastocyanin/cytochrome c6-ferredoxin oxidoreductase, converting photonic excitation into a charge separation, which transfers an electron from the donor P700 chlorophyll pair to the spectroscopically characterized acceptors A0, A1, FX, FA and FB in turn. Oxidized P700 is reduced on the lumenal side of the thylakoid membrane by plastocyanin or cytochrome c6. The sequence is that of Photosystem I P700 chlorophyll a apoprotein A1 from Nostoc punctiforme (strain ATCC 29133 / PCC 73102).